Consider the following 265-residue polypeptide: Triosephosphate isomerase (265 aa).

8–10 provides a ligand contact to substrate; it reads NWK. The Electrophile role is filled by His103. Residue Glu182 is the Proton acceptor of the active site. Substrate contacts are provided by residues Gly188, Ser226, and 247–248; that span reads GG.

The protein belongs to the triosephosphate isomerase family. As to quaternary structure, homodimer.

Its subcellular location is the cytoplasm. It carries out the reaction D-glyceraldehyde 3-phosphate = dihydroxyacetone phosphate. The protein operates within carbohydrate biosynthesis; gluconeogenesis. It participates in carbohydrate degradation; glycolysis; D-glyceraldehyde 3-phosphate from glycerone phosphate: step 1/1. Functionally, involved in the gluconeogenesis. Catalyzes stereospecifically the conversion of dihydroxyacetone phosphate (DHAP) to D-glyceraldehyde-3-phosphate (G3P). The polypeptide is Triosephosphate isomerase (Psychrobacter sp. (strain PRwf-1)).